A 357-amino-acid polypeptide reads, in one-letter code: UPF0283 membrane protein BCAN_A1047 (357 aa).

A disordered region spans residues 1–36 (MSDKTPRKPTAFRLEQPARVSAASEQEEPRRPRAVK). Residues 27–36 (EEPRRPRAVK) are compositionally biased toward basic and acidic residues. Transmembrane regions (helical) follow at residues 78–98 (ILFGALGILVSFAIGIWTEDL) and 109–129 (LGWTALGVAMVALAAFAAIIL).

It belongs to the UPF0283 family.

The protein localises to the cell inner membrane. This is UPF0283 membrane protein BCAN_A1047 from Brucella canis (strain ATCC 23365 / NCTC 10854 / RM-666).